Reading from the N-terminus, the 172-residue chain is 3-phenylpropionate/cinnamic acid dioxygenase subunit beta (172 aa).

This sequence belongs to the bacterial ring-hydroxylating dioxygenase beta subunit family. As to quaternary structure, this dioxygenase system consists of four proteins: the two subunits of the hydroxylase component (HcaE and HcaF), a ferredoxin (HcaC) and a ferredoxin reductase (HcaD).

It carries out the reaction 3-phenylpropanoate + NADH + O2 + H(+) = 3-(cis-5,6-dihydroxycyclohexa-1,3-dien-1-yl)propanoate + NAD(+). The enzyme catalyses (E)-cinnamate + NADH + O2 + H(+) = (2E)-3-(cis-5,6-dihydroxycyclohexa-1,3-dien-1-yl)prop-2-enoate + NAD(+). It participates in aromatic compound metabolism; 3-phenylpropanoate degradation. Functionally, part of the multicomponent 3-phenylpropionate dioxygenase. Converts 3-phenylpropionic acid (PP) and cinnamic acid (CI) into 3-phenylpropionate-dihydrodiol (PP-dihydrodiol) and cinnamic acid-dihydrodiol (CI-dihydrodiol), respectively. This Shigella boydii serotype 4 (strain Sb227) protein is 3-phenylpropionate/cinnamic acid dioxygenase subunit beta.